A 258-amino-acid polypeptide reads, in one-letter code: GPI alpha-1,4-mannosyltransferase I, stabilizing subunit (258 aa).

The signal sequence occupies residues 1-21; sequence MAARVAAVRAAAWLLLGAATG. Topologically, residues 22–230 are lumenal; it reads LTRGPAAAFT…PVGLTVHTSL (209 aa). Asn-103 carries N-linked (GlcNAc...) asparagine glycosylation. A helical membrane pass occupies residues 231–251; the sequence is VCSVTLLITILCSTLILVAVF. Topologically, residues 252–258 are cytoplasmic; it reads KYGHFSL.

The protein belongs to the PIGX family. In terms of assembly, part of the glycosylphosphatidylinositol-mannosyltransferase I complex that is composed of PIGM and PIGX. Interacts with PIGM; PIGX stabilizes PIGM.

The protein localises to the endoplasmic reticulum membrane. It functions in the pathway glycolipid biosynthesis; glycosylphosphatidylinositol-anchor biosynthesis. Functionally, stabilizing subunit of the glycosylphosphatidylinositol-mannosyltransferase I complex which catalyzes the transfer of the first mannose, via an alpha-1,4 bond from a dolichol-phosphate-mannose (Dol-P-Man) to the glucosaminyl acyl phosphatidylinositol (GlcN-(acyl)PI) intermediate to generate alpha-D-Man-(1-&gt;4)-alpha-D-GlcN-(1-&gt;6)-(1-radyl,2-acyl-sn-glycero-3-phospho)-2-acyl-inositol and participates in the sixth step of the glycosylphosphatidylinositol-anchor biosynthesis. Probably acts by stabilizing the mannosyltransferase PIGM. This chain is GPI alpha-1,4-mannosyltransferase I, stabilizing subunit, found in Homo sapiens (Human).